We begin with the raw amino-acid sequence, 94 residues long: Translation initiation factor IF-1 (94 aa).

One can recognise an S1-like domain in the interval 1–72; that stretch reads MAKEELIQFE…EKGRLIFRHK (72 aa). The interval 71–94 is disordered; it reads HKDERPGGTGAPRGAPPRGQFRRR. The segment covering 82–94 has biased composition (low complexity); the sequence is PRGAPPRGQFRRR.

It belongs to the IF-1 family. Component of the 30S ribosomal translation pre-initiation complex which assembles on the 30S ribosome in the order IF-2 and IF-3, IF-1 and N-formylmethionyl-tRNA(fMet); mRNA recruitment can occur at any time during PIC assembly.

Its subcellular location is the cytoplasm. In terms of biological role, one of the essential components for the initiation of protein synthesis. Stabilizes the binding of IF-2 and IF-3 on the 30S subunit to which N-formylmethionyl-tRNA(fMet) subsequently binds. Helps modulate mRNA selection, yielding the 30S pre-initiation complex (PIC). Upon addition of the 50S ribosomal subunit IF-1, IF-2 and IF-3 are released leaving the mature 70S translation initiation complex. This Rhodopseudomonas palustris (strain BisB5) protein is Translation initiation factor IF-1.